The chain runs to 343 residues: Dehydrodolichyl diphosphate synthase complex subunit SRT1 (343 aa).

The protein belongs to the UPP synthase family. Forms an active dehydrodolichyl diphosphate synthase complex with NUS1. It depends on Mg(2+) as a cofactor.

The protein resides in the lipid droplet. The enzyme catalyses n isopentenyl diphosphate + (2E,6E)-farnesyl diphosphate = a di-trans,poly-cis-polyprenyl diphosphate + n diphosphate. It functions in the pathway protein modification; protein glycosylation. Its function is as follows. With NUS1, forms the dehydrodolichyl diphosphate synthase (DDS) complex, an essential component of the dolichol monophosphate (Dol-P) biosynthetic machinery. Adds multiple copies of isopentenyl pyrophosphate (IPP) to farnesyl pyrophosphate (FPP) to produce dehydrodolichyl diphosphate (Dedol-PP), a precursor of dolichol which is utilized as a sugar carrier in protein glycosylation in the endoplasmic reticulum (ER). The chain is Dehydrodolichyl diphosphate synthase complex subunit SRT1 from Saccharomyces cerevisiae (strain ATCC 204508 / S288c) (Baker's yeast).